Consider the following 616-residue polypeptide: Glycoprotein Q1 (616 aa).

An N-terminal signal peptide occupies residues 1 to 24 (MRPPRRSAPILVCAISMATALSNA). N-linked (GlcNAc...) asparagine; by host glycosylation is found at N23, N44, N282, N330, and N351.

As to quaternary structure, interacts with isoform gQ2. The heterodimer gQ1-gQ2 associates with the glycoprotein complex gH-gL to form a tetrameric complex. The gH/gL/gQ1/gQ2 complex binds to host TNFRSF4. Glycosylated by host.

The protein resides in the virion. It localises to the host endoplasmic reticulum lumen. Plays a role in virus entry by participating in host receptor binding at the cell surface. The protein is Glycoprotein Q1 of Homo sapiens (Human).